A 904-amino-acid chain; its full sequence is Essential for maintenance of the cell wall protein 1 (904 aa).

TPR repeat units lie at residues 510–544 (WQLD…ETAL), 563–596 (INEN…GKYV), 603–636 (AKYY…YPLS), 637–670 (FETW…DPYH), 671–704 (ALSW…DAQK), and 706–739 (WKIW…RRDK).

This sequence belongs to the TTC27 family.

Its subcellular location is the cytoplasm. It localises to the nucleus. Required for the maintenance of the cell wall integrity. This is Essential for maintenance of the cell wall protein 1 (EMW1) from Saccharomyces cerevisiae (strain ATCC 204508 / S288c) (Baker's yeast).